Reading from the N-terminus, the 76-residue chain is ATP synthase subunit 9, mitochondrial (76 aa).

Helical transmembrane passes span 14–34 (ISTIGLIGAGIGIGIVFAALI) and 56–76 (ALSEATGLFCLMISFMLLFAV).

Belongs to the ATPase C chain family. As to quaternary structure, F-type ATPases have 2 components, CF(1) - the catalytic core - and CF(0) - the membrane proton channel. CF(1) has five subunits: alpha(3), beta(3), gamma(1), delta(1), epsilon(1). CF(0) has three main subunits: a, b and c.

It is found in the mitochondrion membrane. In terms of biological role, mitochondrial membrane ATP synthase (F(1)F(0) ATP synthase or Complex V) produces ATP from ADP in the presence of a proton gradient across the membrane which is generated by electron transport complexes of the respiratory chain. F-type ATPases consist of two structural domains, F(1) - containing the extramembraneous catalytic core and F(0) - containing the membrane proton channel, linked together by a central stalk and a peripheral stalk. During catalysis, ATP synthesis in the catalytic domain of F(1) is coupled via a rotary mechanism of the central stalk subunits to proton translocation. Part of the complex F(0) domain. A homomeric c-ring of probably 10 subunits is part of the complex rotary element. This chain is ATP synthase subunit 9, mitochondrial (ATP9), found in Candida glabrata (strain ATCC 2001 / BCRC 20586 / JCM 3761 / NBRC 0622 / NRRL Y-65 / CBS 138) (Yeast).